The chain runs to 685 residues: Probable inactive leucine-rich repeat receptor-like protein kinase At1g66830 (685 aa).

The N-terminal stretch at 1–21 (MSQLFLILCFILTHFFAIATS) is a signal peptide. At 22-305 (LNDQGLALLS…RRANHHSRLC (284 aa)) the chain is on the extracellular side. N-linked (GlcNAc...) asparagine glycans are attached at residues Asn38 and Asn48. LRR repeat units follow at residues 65–89 (DMRV…IGSL), 90–113 (LSLR…LFGL), 115–136 (GLQS…EIGS), 137–161 (LKSL…LIPC), 162–185 (KKLK…LGSN), 186–210 (LVHL…VGSL), 212–234 (NLKG…SLGN), and 235–260 (LPEL…VLLN). Residue Asn151 is glycosylated (N-linked (GlcNAc...) asparagine). N-linked (GlcNAc...) asparagine glycosylation is present at Asn193. Residue Asn247 is glycosylated (N-linked (GlcNAc...) asparagine). The chain crosses the membrane as a helical span at residues 306–326 (IILTATGGTVAGIIFLASLFI). Topologically, residues 327-685 (YYLRKASARA…ESFEKLVTSI (359 aa)) are cytoplasmic. A Protein kinase domain is found at 397–682 (KASAFLLGKS…SVLESFEKLV (286 aa)). Phosphoserine is present on residues Ser399, Ser480, and Ser590.

It belongs to the protein kinase superfamily. Ser/Thr protein kinase family.

It is found in the cell membrane. This chain is Probable inactive leucine-rich repeat receptor-like protein kinase At1g66830, found in Arabidopsis thaliana (Mouse-ear cress).